We begin with the raw amino-acid sequence, 512 residues long: Cytochrome P450 76C2 (512 aa).

Residues 3–23 form a helical membrane-spanning segment; the sequence is IIFEQALFPLFCFVLSFFIIF. Heme is bound at residue C451.

Belongs to the cytochrome P450 family. Heme serves as cofactor.

The protein resides in the membrane. The sequence is that of Cytochrome P450 76C2 (CYP76C2) from Arabidopsis thaliana (Mouse-ear cress).